Consider the following 188-residue polypeptide: Ribosome-recycling factor (188 aa).

This sequence belongs to the RRF family.

The protein localises to the cytoplasm. Its function is as follows. Responsible for the release of ribosomes from messenger RNA at the termination of protein biosynthesis. May increase the efficiency of translation by recycling ribosomes from one round of translation to another. This is Ribosome-recycling factor from Lawsonia intracellularis (strain PHE/MN1-00).